The following is a 147-amino-acid chain: Cytochrome c-type biogenesis protein CcmE (147 aa).

At 1–7 (MTRKQKR) the chain is on the cytoplasmic side. The chain crosses the membrane as a helical; Signal-anchor for type II membrane protein span at residues 8-28 (LSVIVGGLAFLGAATGLTFYA). Residues 29–147 (LGQKASYFYM…KGVWQESKSE (119 aa)) lie on the Periplasmic side of the membrane. His122 and Tyr126 together coordinate heme.

This sequence belongs to the CcmE/CycJ family.

The protein resides in the cell inner membrane. Functionally, heme chaperone required for the biogenesis of c-type cytochromes. Transiently binds heme delivered by CcmC and transfers the heme to apo-cytochromes in a process facilitated by CcmF and CcmH. The protein is Cytochrome c-type biogenesis protein CcmE of Mesorhizobium japonicum (strain LMG 29417 / CECT 9101 / MAFF 303099) (Mesorhizobium loti (strain MAFF 303099)).